A 318-amino-acid chain; its full sequence is N-acyl-aromatic-L-amino acid amidohydrolase (carboxylate-forming) (318 aa).

Residues 1 to 210 (MSSLPGSREP…ILDFIELFNQ (210 aa)) form a hydrolytic domain region. The Zn(2+) site is built by His21 and Glu24. Substrate is bound by residues Arg63 and 70–71 (NR). His116 is a Zn(2+) binding site. Residues Glu177 and Tyr287 each coordinate substrate. Positions 211-318 (GMDLPAFEMD…RLTPRSTQTP (108 aa)) are shielding domain. Thr317 bears the Phosphothreonine mark.

Belongs to the AspA/AstE family. Aspartoacylase subfamily. Exists as a mixture of homodimers and homotetramer, both catalytically active. Zn(2+) serves as cofactor. In terms of tissue distribution, expressed predominantly in kidney and to a lesser extent in liver. Weakly expressed in heart, small intestine, brain, lung, testis, and stomach.

It is found in the apical cell membrane. The protein localises to the cytoplasm. It catalyses the reaction an N-acyl-aromatic L-alpha-amino acid + H2O = an aromatic L-alpha-amino acid + a carboxylate. The catalysed reaction is an N-acetyl-L-cysteine-S-conjugate + H2O = an S-substituted L-cysteine + acetate. Plays an important role in deacetylating mercapturic acids in kidney proximal tubules. Also acts on N-acetyl-aromatic amino acids. The protein is N-acyl-aromatic-L-amino acid amidohydrolase (carboxylate-forming) (Acy3) of Mus musculus (Mouse).